We begin with the raw amino-acid sequence, 151 residues long: Proline-rich acidic protein 1 (151 aa).

A signal peptide spans 1 to 20 (MRRLLLVTSLVVVLLWEAGA). The segment at 71 to 151 (LTTEEKPRGQ…EDQDHIYHPQ (81 aa)) is disordered.

Interacts with isoform 1 and isoform 3 of MAD1L1. Interacts with MTTP. Highly expressed in the intestinal epithelial cells (at protein level). Abundantly expressed in the epithelial cells of the liver, kidney and cervix. Significantly down-regulated in hepatocellular carcinoma and right colon adenocarcinoma compared with the respective adjacent normal tissues. Expressed in epididymis (at protein level).

The protein resides in the secreted. Its subcellular location is the endoplasmic reticulum. Its function is as follows. Lipid-binding protein which promotes lipid absorption by facilitating MTTP-mediated lipid transfer (mainly triglycerides and phospholipids) and MTTP-mediated apoB lipoprotein assembly and secretion. Protects the gastrointestinal epithelium from irradiation-induced apoptosis. May play an important role in maintaining normal growth homeostasis in epithelial cells. Involved in p53/TP53-dependent cell survival after DNA damage. May down-regulate the expression of MAD1L1 and exert a suppressive role in mitotic spindle assembly checkpoint in hepatocellular carcinomas. This is Proline-rich acidic protein 1 (PRAP1) from Homo sapiens (Human).